Here is a 362-residue protein sequence, read N- to C-terminus: Chorismate synthase (362 aa).

Residues Arg48 and Arg54 each contribute to the NADP(+) site. FMN contacts are provided by residues 131–133, 243–244, Gly287, 302–306, and Arg328; these read RSS, NA, and KPTSS.

Belongs to the chorismate synthase family. As to quaternary structure, homotetramer. Requires FMNH2 as cofactor.

The enzyme catalyses 5-O-(1-carboxyvinyl)-3-phosphoshikimate = chorismate + phosphate. The protein operates within metabolic intermediate biosynthesis; chorismate biosynthesis; chorismate from D-erythrose 4-phosphate and phosphoenolpyruvate: step 7/7. In terms of biological role, catalyzes the anti-1,4-elimination of the C-3 phosphate and the C-6 proR hydrogen from 5-enolpyruvylshikimate-3-phosphate (EPSP) to yield chorismate, which is the branch point compound that serves as the starting substrate for the three terminal pathways of aromatic amino acid biosynthesis. This reaction introduces a second double bond into the aromatic ring system. The polypeptide is Chorismate synthase (Bradyrhizobium diazoefficiens (strain JCM 10833 / BCRC 13528 / IAM 13628 / NBRC 14792 / USDA 110)).